Here is a 293-residue protein sequence, read N- to C-terminus: 4-hydroxy-tetrahydrodipicolinate synthase (293 aa).

A pyruvate-binding site is contributed by threonine 45. The active-site Proton donor/acceptor is the tyrosine 133. The active-site Schiff-base intermediate with substrate is the lysine 161. Pyruvate is bound at residue isoleucine 204.

Belongs to the DapA family. Homotetramer; dimer of dimers.

The protein resides in the cytoplasm. It carries out the reaction L-aspartate 4-semialdehyde + pyruvate = (2S,4S)-4-hydroxy-2,3,4,5-tetrahydrodipicolinate + H2O + H(+). It functions in the pathway amino-acid biosynthesis; L-lysine biosynthesis via DAP pathway; (S)-tetrahydrodipicolinate from L-aspartate: step 3/4. Functionally, catalyzes the condensation of (S)-aspartate-beta-semialdehyde [(S)-ASA] and pyruvate to 4-hydroxy-tetrahydrodipicolinate (HTPA). The chain is 4-hydroxy-tetrahydrodipicolinate synthase from Yersinia pseudotuberculosis serotype I (strain IP32953).